The following is a 384-amino-acid chain: Carbamoyl phosphate synthase small chain (384 aa).

Residues 1-195 (MLPVLPPALL…LGRGHGTLAD (195 aa)) form a CPSase region. Residues Ser-50, Gly-247, and Gly-249 each contribute to the L-glutamine site. The 186-residue stretch at 199 to 384 (HVVAYDFGVK…RFVALMQERA (186 aa)) folds into the Glutamine amidotransferase type-1 domain. The active-site Nucleophile is Cys-275. 5 residues coordinate L-glutamine: Leu-276, Gln-279, Asn-317, Gly-319, and Phe-320. Residues His-359 and Glu-361 contribute to the active site.

Belongs to the CarA family. As to quaternary structure, composed of two chains; the small (or glutamine) chain promotes the hydrolysis of glutamine to ammonia, which is used by the large (or ammonia) chain to synthesize carbamoyl phosphate. Tetramer of heterodimers (alpha,beta)4.

It carries out the reaction hydrogencarbonate + L-glutamine + 2 ATP + H2O = carbamoyl phosphate + L-glutamate + 2 ADP + phosphate + 2 H(+). The catalysed reaction is L-glutamine + H2O = L-glutamate + NH4(+). It participates in amino-acid biosynthesis; L-arginine biosynthesis; carbamoyl phosphate from bicarbonate: step 1/1. It functions in the pathway pyrimidine metabolism; UMP biosynthesis via de novo pathway; (S)-dihydroorotate from bicarbonate: step 1/3. Its function is as follows. Small subunit of the glutamine-dependent carbamoyl phosphate synthetase (CPSase). CPSase catalyzes the formation of carbamoyl phosphate from the ammonia moiety of glutamine, carbonate, and phosphate donated by ATP, constituting the first step of 2 biosynthetic pathways, one leading to arginine and/or urea and the other to pyrimidine nucleotides. The small subunit (glutamine amidotransferase) binds and cleaves glutamine to supply the large subunit with the substrate ammonia. This chain is Carbamoyl phosphate synthase small chain, found in Rubrivivax gelatinosus (strain NBRC 100245 / IL144).